A 98-amino-acid chain; its full sequence is NADH-ubiquinone oxidoreductase chain 4L (98 aa).

3 helical membrane-spanning segments follow: residues 1–21, 29–49, and 58–78; these read MPII…GMLT, SLLC…LMAL, and IVPI…LSLL.

Belongs to the complex I subunit 4L family. Core subunit of respiratory chain NADH dehydrogenase (Complex I) which is composed of 45 different subunits.

The protein resides in the mitochondrion inner membrane. It carries out the reaction a ubiquinone + NADH + 5 H(+)(in) = a ubiquinol + NAD(+) + 4 H(+)(out). In terms of biological role, core subunit of the mitochondrial membrane respiratory chain NADH dehydrogenase (Complex I) which catalyzes electron transfer from NADH through the respiratory chain, using ubiquinone as an electron acceptor. Part of the enzyme membrane arm which is embedded in the lipid bilayer and involved in proton translocation. This Presbytis melalophos (Mitred leaf monkey) protein is NADH-ubiquinone oxidoreductase chain 4L (MT-ND4L).